We begin with the raw amino-acid sequence, 393 residues long: MCGPRNAEAVSWRSWLIEVCGFALAALTLVLTLIFASLPEMGFPCFYATVADYDTLNDTSGGVWTRQPLVAPALFLETPTVTSFFGFTATVLLAHALYAVAGAVVLRREAGRLAFQPSVVLYAASTVAAPGTLMLGALCAWTLQAVVLLMAHKQAGLAAAAYITHFVFLALFGACHACKGTGDVRAALAASPPLRRVAVHARAVVTNVVLGAVGLGAAVVGLMLGVLLANSFHISLWKTAEAALAVFTLLALALMVFVEVVVSGYVQVLPTPAFCVLVASAAFGVSAHRYFAKFSEALGETHGVVIGTRAVLAVLSLIALAMIVVRLVRACIAHRARGSRFYANVDKARTTARRYLQKRLHGRGNDEYLLAPGSGDDEFDDGDEVVYENLGFE.

The Intravirion portion of the chain corresponds to methionine 1–serine 14. A helical transmembrane segment spans residues tryptophan 15 to phenylalanine 35. At alanine 36–serine 83 the chain is on the virion surface side. A helical membrane pass occupies residues phenylalanine 84–valine 104. Residues valine 105 to proline 130 are Intravirion-facing. The helical transmembrane segment at glycine 131 to alanine 151 threads the bilayer. The Virion surface portion of the chain corresponds to histidine 152–glutamine 154. A helical transmembrane segment spans residues alanine 155–cysteine 175. The Intravirion portion of the chain corresponds to histidine 176 to asparagine 207. Residues valine 208–leucine 228 traverse the membrane as a helical segment. Residues alanine 229 to glutamate 241 are Virion surface-facing. Residues alanine 242–valine 262 traverse the membrane as a helical segment. Residues serine 263–glycine 264 are Intravirion-facing. The helical transmembrane segment at tyrosine 265–valine 285 threads the bilayer. The Virion surface portion of the chain corresponds to serine 286–glycine 303. Residues valine 304 to valine 324 traverse the membrane as a helical segment. Over valine 325–glutamate 393 the chain is Intravirion.

Belongs to the herpesviridae glycoprotein M family. As to quaternary structure, interacts (via N-terminus) with gN (via N-terminus). The gM-gN heterodimer forms the gCII complex.

Its subcellular location is the virion membrane. It localises to the host Golgi apparatus. The protein localises to the host trans-Golgi network. The protein resides in the host endosome membrane. It is found in the host nucleus inner membrane. In terms of biological role, envelope glycoprotein important for virion assembly and egress. Plays a role in the correct incorporation of gH-gL into virion membrane. Directs the glycoprotein N (gN) to the host trans-Golgi network. In Suid herpesvirus 1 (SuHV-1), this protein is Envelope glycoprotein M.